The following is a 585-amino-acid chain: MVRLTPRLVAIFLVEKTTSGANFVFHWPLQPQVRLQATHHNNDSAESAIGMLDLDDSDDDENNRFTEVADDTHVLGYEKGFLANMLSPRIELCNQKFEIWVDGLTFLGCPVHIGPNGEWAKRRKPRTTVESNASSSHLVSKPESSHPSTGSFEVKSSSSKSRSSMSLFHVVFVLNVPTATVYRPTVNTMYDHIVVKLVTGLKYEQAKRNYVENECIHILKLTEKYSSQNVPFDVYAAQIPHHSNLASVLATTYEALINMHTAYLEINQSINLSLLWPMSVSTNTLENYELQVRPSTILASQTIFSEEHPSSIEPFVAPYWTLLLLKDTDTIMKRVPLLQNSLLSSFIAIVKPNLTFTDIANRLGISVSECFILAKHLIHWRKAIAIPPLLIRNTYVTSPTANLFNLEEESKLFKKEFPSLPSLSTFLAILSFKPRPFASIIPSKDHELVYLEMLAWLCRRNWVYEQNIYMYILVPEEIKKKAIALIESDESSKNDMQLRKQLEQDNGKESIIIDPHSASLLEQKWIQIIAYERGPEMAPLFTSIVKYLNGRFALQTIWVAEGLPRKLMRNILNEYNDYILRWHSW.

Residues 117-157 (GEWAKRRKPRTTVESNASSSHLVSKPESSHPSTGSFEVKSS) form a disordered region. The span at 128 to 138 (TVESNASSSHL) shows a compositional bias: polar residues. Over residues 148-157 (STGSFEVKSS) the composition is skewed to low complexity.

Belongs to the NPR3 family.

The chain is Nitrogen permease regulator 3-like protein from Schizosaccharomyces pombe (strain 972 / ATCC 24843) (Fission yeast).